Reading from the N-terminus, the 293-residue chain is Bifunctional protein FolD (293 aa).

NADP(+) is bound by residues 164–166 (GRS), Ser193, and Thr234.

This sequence belongs to the tetrahydrofolate dehydrogenase/cyclohydrolase family. In terms of assembly, homodimer.

It carries out the reaction (6R)-5,10-methylene-5,6,7,8-tetrahydrofolate + NADP(+) = (6R)-5,10-methenyltetrahydrofolate + NADPH. It catalyses the reaction (6R)-5,10-methenyltetrahydrofolate + H2O = (6R)-10-formyltetrahydrofolate + H(+). It functions in the pathway one-carbon metabolism; tetrahydrofolate interconversion. Catalyzes the oxidation of 5,10-methylenetetrahydrofolate to 5,10-methenyltetrahydrofolate and then the hydrolysis of 5,10-methenyltetrahydrofolate to 10-formyltetrahydrofolate. This Bacteroides thetaiotaomicron (strain ATCC 29148 / DSM 2079 / JCM 5827 / CCUG 10774 / NCTC 10582 / VPI-5482 / E50) protein is Bifunctional protein FolD.